The primary structure comprises 182 residues: CDP-diacylglycerol--glycerol-3-phosphate 3-phosphatidyltransferase (182 aa).

Residues 2–12 (QFNIPTLLTLF) are Cytoplasmic-facing. A helical membrane pass occupies residues 13-37 (RVILIPFFVLVFYLPVTWSPFAAAL). At 38–60 (IFCVAAVTDWFDGFLARRWNQST) the chain is on the periplasmic side. The helical transmembrane segment at 61-81 (RFGAFLDPVADKVLVAIAMVL) threads the bilayer. The Cytoplasmic segment spans residues 82–86 (VTEHY). A helical membrane pass occupies residues 87 to 107 (HSWWVTLPAATMIAREIIISA). The Periplasmic segment spans residues 108–145 (LREWMAELGKRSSVAVSWIGKVKTTAQMVALAWLLWRP). A helical membrane pass occupies residues 146-168 (NIWVEYVGIALFFVAAVLTLWSM). At 169-181 (LQYLSAARADLLD) the chain is on the cytoplasmic side.

It belongs to the CDP-alcohol phosphatidyltransferase class-I family.

Its subcellular location is the cell inner membrane. It carries out the reaction a CDP-1,2-diacyl-sn-glycerol + sn-glycerol 3-phosphate = a 1,2-diacyl-sn-glycero-3-phospho-(1'-sn-glycero-3'-phosphate) + CMP + H(+). It participates in phospholipid metabolism; phosphatidylglycerol biosynthesis; phosphatidylglycerol from CDP-diacylglycerol: step 1/2. In terms of biological role, catalyzes the conversion of cytidine diphosphate diacylglycerol (CDP-DG) and glycerol 3-phosphate into phosphatidylglycerol. Essential for the synthesis of anionic phospholipids, thereby playing a role in balancing the ratio of zwitterionic and anionic phospholipids, which is thought to be important for normal membrane function. The chain is CDP-diacylglycerol--glycerol-3-phosphate 3-phosphatidyltransferase from Shigella boydii serotype 4 (strain Sb227).